We begin with the raw amino-acid sequence, 160 residues long: Transcription elongation factor GreA (160 aa).

A coiled-coil region spans residues 11–38 (YDRLMKELERLKSERPAIIQAIKEAREE).

It belongs to the GreA/GreB family.

Necessary for efficient RNA polymerase transcription elongation past template-encoded arresting sites. The arresting sites in DNA have the property of trapping a certain fraction of elongating RNA polymerases that pass through, resulting in locked ternary complexes. Cleavage of the nascent transcript by cleavage factors such as GreA or GreB allows the resumption of elongation from the new 3'terminus. GreA releases sequences of 2 to 3 nucleotides. This Nitratidesulfovibrio vulgaris (strain DSM 19637 / Miyazaki F) (Desulfovibrio vulgaris) protein is Transcription elongation factor GreA.